The chain runs to 134 residues: Ribonuclease VapC (134 aa).

The 121-residue stretch at 4–124 folds into the PINc domain; it reads IVDTSIIIAL…NTKDFKRIPE (121 aa). D6 provides a ligand contact to Mg(2+).

Belongs to the PINc/VapC protein family. Mg(2+) is required as a cofactor.

Functionally, toxic component of a type II toxin-antitoxin (TA) system. Has ssRNase activity. Its RNase activity is partially neutralized by cognate antitoxin VapB. Rapidly induces apoptosis upon microinjection into mouse fibroblasts (L929 line). Probably contributes to host cell death if bacterial cell lysis occurs during host infection. The chain is Ribonuclease VapC from Rickettsia bellii (strain RML369-C).